Here is a 133-residue protein sequence, read N- to C-terminus: C-C motif chemokine 21a (133 aa).

The signal sequence occupies residues 1 to 23; that stretch reads MAQMMTLSLLSLVLALCIPWTQG. 3 cysteine pairs are disulfide-bonded: Cys-31–Cys-57, Cys-32–Cys-75, and Cys-103–Cys-122. The tract at residues 86–133 is disordered; sequence LMRRLDQPPAPGKQSPGCRKNRGTSKSGKKGKGSKGCKRTEQTQPSRG. The interval 98-133 is C-terminal basic extension; that stretch reads KQSPGCRKNRGTSKSGKKGKGSKGCKRTEQTQPSRG. Over residues 104 to 122 the composition is skewed to basic residues; the sequence is RKNRGTSKSGKKGKGSKGC.

Belongs to the intercrine beta (chemokine CC) family. In terms of assembly, binds to CCR7 and to CXCR3. Interacts with PDPN; relocalizes PDPN to the basolateral membrane. Interacts with GPR174. Expressed strongly in lung, spleen, thymus, peripheral and mesentric lymph nodes. Also expressed in the testis, kidney, liver, and heart.

The protein localises to the secreted. Inhibits hemopoiesis and stimulates chemotaxis. Chemotactic in vitro for thymocytes and activated T-cells, but not for B-cells, macrophages, or neutrophils. Potent mesangial cell chemoattractant. Shows preferential activity towards naive T-cells. May play a role in mediating homing of lymphocytes to secondary lymphoid organs. The protein is C-C motif chemokine 21a (Ccl21a) of Mus musculus (Mouse).